Consider the following 282-residue polypeptide: MRVALVVDIVRQEEKLIAKALEKFQLQYDVINVAQEPLPFNKALGRYDVAIIRPISMYRALYASAVLESAGVHTINSSDTISLCGDKILTYSKLYREGIPIPDSIIAMSSDAALKAYEQKGFPLIDKPPIGSWGRLVSLIRDIFEGKTIIEHRELMGNSALKVHIVQEYINYKSRDIRCIVIGSELLGCYARNIPSNEWRANIALGGYPSQIEVDHKLKETVLKATSIIGGEFVSIDVMEHQSKNYVINEFNDVPEFKGFMLATNIDVAEELVSYVKNNYLR.

Residues lysine 87, lysine 127, 131–137 (GSWGRLV), and 167–178 (QEYINYKSRDIR) contribute to the ATP site. Residues 91–277 (YSKLYREGIP…VAEELVSYVK (187 aa)) form the ATP-grasp domain. Arginine 192 contributes to the substrate binding site. Asparagine 202 serves as a coordination point for ATP. 203–204 (IA) is a binding site for substrate. Mg(2+) is bound by residues aspartate 237, glutamate 250, and asparagine 252. 256 to 260 (EFKGF) contacts substrate. A GF motif that is essential for ArgX substrate specificity motif is present at residues 259–260 (GF).

Belongs to the RimK family. LysX subfamily. As to quaternary structure, homotetramer. Interacts with LysW. Requires Mg(2+) as cofactor.

The catalysed reaction is [amino-group carrier protein]-C-terminal-L-glutamate + L-glutamate + ATP = [amino-group carrier protein]-C-terminal-gamma-(L-glutamyl)-L-glutamate + ADP + phosphate + H(+). Its pathway is amino-acid biosynthesis; L-arginine biosynthesis. In terms of biological role, catalyzes the ATP-dependent formation of a covalent bond between the amino group of glutamate and the gamma-carboxyl group of the C-terminal glutamate residue in LysW. This is Glutamate--LysW ligase ArgX from Sulfolobus acidocaldarius (strain ATCC 33909 / DSM 639 / JCM 8929 / NBRC 15157 / NCIMB 11770).